We begin with the raw amino-acid sequence, 954 residues long: Serine/threonine-protein kinase ste20 (954 aa).

The segment covering 1 to 17 (MDGQLSLLSPTSSSSTS) has biased composition (low complexity). 2 disordered regions span residues 1–165 (MDGQ…YDPL) and 203–316 (AAPA…RKKS). Over residues 18-28 (HSRKRLTKKQR) the composition is skewed to basic residues. Composition is skewed to polar residues over residues 33-42 (NHRTSSSFNV), 57-75 (SASS…SLAR), and 100-121 (RSHT…TIPT). Low complexity-rich tracts occupy residues 127–136 (SPASSSQPQT), 143–153 (SAVASTTVTSS), and 203–214 (AAPAPTSTTTIA). Positions 224–234 (VAPPPPPPPPA) are enriched in pro residues. Composition is skewed to low complexity over residues 245-256 (ARSSKPSKSPKS) and 265-277 (ASSF…FSSA). The region spanning 334-347 (ISAPENPVHVTHVG) is the CRIB domain. Disordered regions lie at residues 440-562 (PMIS…VQAS) and 587-655 (QAMA…SNAI). Pro residues-rich tracts occupy residues 463–475 (RAPP…PGPL) and 514–527 (MPPP…PYLP). The region spanning 674-925 (YRGFTKIGQG…AHDLLRHDFM (252 aa)) is the Protein kinase domain. ATP is bound by residues 680–688 (IGQGASGGV) and Lys703. Asp793 serves as the catalytic Proton acceptor.

It belongs to the protein kinase superfamily. STE Ser/Thr protein kinase family. STE20 subfamily.

The protein localises to the cytoplasm. The protein resides in the nucleus. It catalyses the reaction L-seryl-[protein] + ATP = O-phospho-L-seryl-[protein] + ADP + H(+). The catalysed reaction is L-threonyl-[protein] + ATP = O-phospho-L-threonyl-[protein] + ADP + H(+). Its function is as follows. MAP4K component of the MAPK pathway required for the mating pheromone response and the regulation of cell polarity and cell cycle. Phosphorylates histone H2B to form H2BS10ph. The sequence is that of Serine/threonine-protein kinase ste20 (stk-4) from Neurospora crassa (strain ATCC 24698 / 74-OR23-1A / CBS 708.71 / DSM 1257 / FGSC 987).